The chain runs to 209 residues: Imidazole glycerol phosphate synthase subunit HisH (209 aa).

One can recognise a Glutamine amidotransferase type-1 domain in the interval 1-205 (MIAIIDYGMG…KGVVEAWKSS (205 aa)). The active-site Nucleophile is the cysteine 79. Active-site residues include histidine 180 and glutamate 182.

In terms of assembly, heterodimer of HisH and HisF.

Its subcellular location is the cytoplasm. The catalysed reaction is 5-[(5-phospho-1-deoxy-D-ribulos-1-ylimino)methylamino]-1-(5-phospho-beta-D-ribosyl)imidazole-4-carboxamide + L-glutamine = D-erythro-1-(imidazol-4-yl)glycerol 3-phosphate + 5-amino-1-(5-phospho-beta-D-ribosyl)imidazole-4-carboxamide + L-glutamate + H(+). The enzyme catalyses L-glutamine + H2O = L-glutamate + NH4(+). It functions in the pathway amino-acid biosynthesis; L-histidine biosynthesis; L-histidine from 5-phospho-alpha-D-ribose 1-diphosphate: step 5/9. Functionally, IGPS catalyzes the conversion of PRFAR and glutamine to IGP, AICAR and glutamate. The HisH subunit catalyzes the hydrolysis of glutamine to glutamate and ammonia as part of the synthesis of IGP and AICAR. The resulting ammonia molecule is channeled to the active site of HisF. The chain is Imidazole glycerol phosphate synthase subunit HisH from Bacillus mycoides (strain KBAB4) (Bacillus weihenstephanensis).